The sequence spans 908 residues: MMPLKMCTWGGSYPVGSPGKVGLLSFKETKNTGNKAGNESPVQELRQDVSKKIIECIIEESQKVLQLEDDSLDSKGKGLSDQATASHSVAGTEFSNIPGLLAIQHELQQGSRKADSQNAAEETELETQKCFPSDNNCEKSEKTEDETNNLTEVSSADQLDASKLETEILNKEAVEVKEGDVVNPASSDALSTKDFAAVEEVAPAKPPRHLTPEPDIVASTKKPVPARPPPPTNFPPPRPPPPSRPAPPPRKKKSDLEFEALKTPDLDVPKDNIASDSLLTTNMASESTVRDSLPSLDLASATSGDKIVTAQENGKAPDVQTVAGEVMGPQRPRSNSGRELTDEEILASVMIKNLDTGEEIPLSLAEEKLPTGINPLTPLTLHIMRRTKEYVSNDATQSDDEEKLQSQQTDTDGGRLKQKTTQLKKFLGKSVKRAKHLAEEYGERAINKVKSVRDEVFHTDQDDPSSSDDEGMPYTRPVKFKAAHGFKGPYDFDQIKVVQDLSGEHMGAVWTMKFSHCGRLLASAGQDNIVRIWALKNAFDYFNNMRMKYNTEGRVSPSPSQESLSSSKSDTDMGVCSGTDEDPDDKNAPFRQRPFCKYKGHTADLLDLSWSKNYFLLSSSMDKTVRLWHISRRECLCCFQHIDFVTAIAFHPRDDRYFLSGSLDGKLRLWNIPDKKVALWNEVDGQTKLITAANFCQNGKYAVIGTYDGRCIFYDTEHLKYHTQIHVRSTRGRNKVGRKITGIEPLPGENKILVTSNDSRIRLYDLRDLSLSMKYKGYVNSSSQIKASFSHDFTYLVSGSEDKYVYIWSTYHDLSKFTSVRRDRNDFWEGIKAHNAVVTSAIFAPNPSLMLSLDVQSEKLEGIDKYEDAEVLDNTSTGIVKTDNTEVLLSADFTGAQCFYVKNSFLYP.

The binding activity stretch occupies residues 1–163 (MMPLKMCTWG…SSADQLDASK (163 aa)). Residues Ser17, Ser40, Ser61, Ser71, Ser86, and Ser116 each carry the phosphoserine modification. Composition is skewed to polar residues over residues 108 to 120 (QQGS…QNAA) and 148 to 157 (NNLTEVSSAD). Disordered stretches follow at residues 108–158 (QQGS…SADQ), 202–273 (APAK…KDNI), 309–341 (TAQE…RELT), 391–418 (VSND…RLKQ), and 454–474 (DEVF…GMPY). Residues Thr151 and Thr211 each carry the phosphothreonine modification. The segment at 203 to 249 (PAKPPRHLTPEPDIVASTKKPVPARPPPPTNFPPPRPPPPSRPAPPP) is important for interaction with ARHGAP26 AND ARHGAP10. The span at 225–248 (PARPPPPTNFPPPRPPPPSRPAPP) shows a compositional bias: pro residues. Residue Ser254 is modified to Phosphoserine. Positions 254 to 270 (SDLEFEALKTPDLDVPK) are enriched in basic and acidic residues. A Phosphothreonine modification is found at Thr263. The interval 326–339 (VMGPQRPRSNSGRE) is important for interaction with RAB11A. 2 positions are modified to phosphoserine: Ser334 and Ser336. Phosphothreonine is present on residues Thr341 and Thr396. Phosphoserine occurs at positions 398, 465, 466, and 467. A compositionally biased stretch (acidic residues) spans 462 to 471 (DDPSSSDDEG). Tyr474 bears the Phosphotyrosine mark. Residues 504–543 (EHMGAVWTMKFSHCGRLLASAGQDNIVRIWALKNAFDYFN) form a WD 1 repeat. A disordered region spans residues 552 to 587 (EGRVSPSPSQESLSSSKSDTDMGVCSGTDEDPDDKN). Ser556 and Ser560 each carry phosphoserine. Residues 556–568 (SPSPSQESLSSSK) are compositionally biased toward low complexity. WD repeat units lie at residues 600 to 638 (GHTA…CLCC), 640 to 680 (QHID…VALW), 685 to 724 (GQTK…YHTQ), 735 to 774 (KVGR…LSMK), and 779 to 818 (VNSS…SKFT).

In terms of assembly, interacts preferentially with the GTP-bound form of RAB11 when membrane-associated. Interacts with GRAF1/ARHGAP26 or GRAF2/ARHGAP10; the interaction connects the endoplasmic reticulum (ER) with the endosomal tubule. Interacts with VAPA (via MSP domain) or VAPB (via MSP domain); the interaction connects the ER with the endosomal tubule. Does not bind to other Rab and Rho small G proteins. Phosphorylated by ATK1; the phosphorylation stabilizes its interaction with RAB11A and RAB11B. In terms of tissue distribution, expressed in heart; brain; spleen; lung; liver; muscle and kidney.

It localises to the cytoplasm. The protein localises to the cytosol. The protein resides in the perinuclear region. Its subcellular location is the endosome membrane. It is found in the golgi apparatus. It localises to the trans-Golgi network. In terms of biological role, downstream effector for Rab11 which regulates Rab11 intracellular membrane trafficking functions such as endocytic recycling, intracellular ciliogenesis and protein export. ATK1-mediated phosphorylation of WDR44 induces binding to Rab11 which activates endocytic recycling of transferrin receptor back to the plasma membrane. When bound to Rab11, prevents the formation of the ciliogenic Rab11-Rabin8/RAB3IP-RAB11FIP3 complex, therefore inhibiting preciliary trafficking and ciliogenesis. May participate in neo-synthesized protein export by connecting the endoplasmic reticulum (ER) with the endosomal tubule via direct interactions with the integral ER proteins VAPA or VAPB and the endosomal protein GRAFs (GRAF1/ARHGAP26 or GRAF2/ARHGAP10), which facilitates the transfer of proteins such as E-cadherin, MPP14 and CFTR into a Rab8-Rab10-Rab11-dependent export route. This Rattus norvegicus (Rat) protein is WD repeat-containing protein 44.